The primary structure comprises 432 residues: Probable protein phosphatase 2C 75 (432 aa).

The PPM-type phosphatase domain maps to 44–356; the sequence is VACLFTRQGK…DDCAVVCLFL (313 aa). Mn(2+)-binding residues include Asp80, Gly81, Asp301, and Asp347. The disordered stretch occupies residues 372-408; the sequence is SPRMPALSGITRPNSKRVTPDDVDDGSDSNVSGDERS.

The protein belongs to the PP2C family. The cofactor is Mg(2+). It depends on Mn(2+) as a cofactor.

It carries out the reaction O-phospho-L-seryl-[protein] + H2O = L-seryl-[protein] + phosphate. It catalyses the reaction O-phospho-L-threonyl-[protein] + H2O = L-threonyl-[protein] + phosphate. The polypeptide is Probable protein phosphatase 2C 75 (Oryza sativa subsp. japonica (Rice)).